A 225-amino-acid polypeptide reads, in one-letter code: 3-dehydroquinate dehydratase (225 aa).

3-dehydroquinate is bound by residues S6, 30 to 32 (EWR), and R62. The active-site Proton donor/acceptor is the H118. K143 acts as the Schiff-base intermediate with substrate in catalysis. 3-dehydroquinate-binding residues include R186, S205, and Q209.

It belongs to the type-I 3-dehydroquinase family. As to quaternary structure, homodimer.

The catalysed reaction is 3-dehydroquinate = 3-dehydroshikimate + H2O. It participates in metabolic intermediate biosynthesis; chorismate biosynthesis; chorismate from D-erythrose 4-phosphate and phosphoenolpyruvate: step 3/7. In terms of biological role, involved in the third step of the chorismate pathway, which leads to the biosynthesis of aromatic amino acids. Catalyzes the cis-dehydration of 3-dehydroquinate (DHQ) and introduces the first double bond of the aromatic ring to yield 3-dehydroshikimate. The sequence is that of 3-dehydroquinate dehydratase from Streptococcus pneumoniae (strain Taiwan19F-14).